The sequence spans 145 residues: Photosystem I reaction center subunit VI-2, chloroplastic (145 aa).

The transit peptide at 1-50 (MASFATIAAVQPSAAVKGLGGSSLAGAKLFIKPSRQSFKTKSTRAGAVVA) directs the protein to the chloroplast. The helical transmembrane segment at 102–118 (LLLKFLILGGGSLLTYV) threads the bilayer. The segment at 126–145 (VLPIKRGPQEPPKLGPRGKL) is disordered.

It belongs to the psaH family.

The protein resides in the plastid. The protein localises to the chloroplast thylakoid membrane. Possible role could be the docking of the LHC I antenna complex to the core complex. In Arabidopsis thaliana (Mouse-ear cress), this protein is Photosystem I reaction center subunit VI-2, chloroplastic (PSAH2).